The primary structure comprises 245 residues: Uridylate kinase (245 aa).

12–15 serves as a coordination point for ATP; it reads KISG. Glycine 55 provides a ligand contact to UMP. Residues glycine 56 and arginine 60 each coordinate ATP. Residues aspartate 76 and 137 to 144 each bind UMP; that span reads AGAPYLTT. The ATP site is built by threonine 164, tyrosine 171, and aspartate 174.

The protein belongs to the UMP kinase family. In terms of assembly, homohexamer.

It is found in the cytoplasm. The enzyme catalyses UMP + ATP = UDP + ADP. It functions in the pathway pyrimidine metabolism; CTP biosynthesis via de novo pathway; UDP from UMP (UMPK route): step 1/1. Inhibited by UTP. Catalyzes the reversible phosphorylation of UMP to UDP. In Chlamydia muridarum (strain MoPn / Nigg), this protein is Uridylate kinase.